A 665-amino-acid polypeptide reads, in one-letter code: METPSQRRPTRSGAQASSTPLSPTRITRLQEKEDLQELNDRLAVYIDRVRSLETENAGLRLRITESEEVVSREVSGIKAAYEAELGDARKTLDSVAKERARLQLELSKVREEFKELKARNTKKEGDLLAAQARLKDLEALLNSKEAALSTALSEKRTLEGELHDLRGQVAKLEAALGEAKKQLQDEMLRRVDAENRLQTLKEELDFQKNIYSEELRETKRRHETRLVEIDNGKQREFESRLADALQELRAQHEDQVEQYKKELEKTYSAKLDNARQSAERNSNLVGAAHEELQQSRIRIDSLSAQLSQLQKQLAAKEAKLRDLEDSLARERDTSRRLLAEKEREMAEMRARMQQQLDEYQELLDIKLALDMEIHAYRKLLEGEEERLRLSPSPTSQRSRGRASSHSSQSQGGGSVTKKRKLESSESRSSFSQHARTSGRVAVEEVDEEGKFVRLRNKSNEDQSMGNWQIKRQNGDDPLMTYRFPPKFTLKAGQVVTIWASGAGATHSPPTDLVWKAQNTWGCGTSLRTALINATGEEVAMRKLVRSLTMVEDNDDEEEDGDELLHHHRGSHCSSSGDPAEYNLRSRTVLCGTCGQPADKAASGSGAQVGGSISSGSSASSVTVTRSFRSVGGSGGGSFGDNLVTRSYLLGNSSPRTQSSQNCSIM.

At Met1 the chain carries N-acetylmethionine. Residues Met1–Thr27 are disordered. Residues Met1–Glu33 form a head region. An interaction with MLIP region spans residues Met1 to Ala130. Thr3 carries the phosphothreonine modification. Ser5 carries the post-translational modification Phosphoserine. Residue Thr10 is modified to Phosphothreonine. A phosphoserine mark is found at Ser12 and Ser18. Thr19 carries the post-translational modification Phosphothreonine. Phosphoserine is present on Ser22. Positions Glu31–Leu387 constitute an IF rod domain. An N6-acetyllysine; alternate modification is found at Lys32. Residue Lys32 is modified to N6-succinyllysine; alternate. A Glycyl lysine isopeptide (Lys-Gly) (interchain with G-Cter in SUMO2); alternate cross-link involves residue Lys32. The tract at residues Asp34–Val70 is coil 1A. Residues Ser51, Ser66, and Ser71 each carry the phosphoserine modification. The interval Ser71–Ala80 is linker 1. N6-acetyllysine occurs at positions 78 and 97. The segment at Tyr81–Thr218 is coil 1B. Lys97 participates in a covalent cross-link: Glycyl lysine isopeptide (Lys-Gly) (interchain with G-Cter in SUMO2). At Ser107 the chain carries Phosphoserine. Residues Lys108, Lys114, Lys123, Lys135, Lys144, and Lys155 each carry the N6-acetyllysine modification. Lys171 is modified (N6-acetyllysine; alternate). Lys171 carries the post-translational modification N6-succinyllysine; alternate. Lys171 is covalently cross-linked (Glycyl lysine isopeptide (Lys-Gly) (interchain with G-Cter in SUMO2); alternate). 3 positions are modified to N6-acetyllysine: Lys180, Lys201, and Lys208. Residue Lys201 forms a Glycyl lysine isopeptide (Lys-Gly) (interchain with G-Cter in SUMO2); alternate linkage. Lys201 is covalently cross-linked (Glycyl lysine isopeptide (Lys-Gly) (interchain with G-Cter in SUMO); alternate). A Glycyl lysine isopeptide (Lys-Gly) (interchain with G-Cter in SUMO2) cross-link involves residue Lys208. Ser212 bears the Phosphoserine mark. Residues Lys219 and Lys233 each participate in a glycyl lysine isopeptide (Lys-Gly) (interchain with G-Cter in SUMO2) cross-link. A linker 2 region spans residues Lys219–Ala242. Residues Lys233, Lys260, Lys265, and Lys270 each carry the N6-acetyllysine modification. The interval Asp243–Glu383 is coil 2. Lys260 participates in a covalent cross-link: Glycyl lysine isopeptide (Lys-Gly) (interchain with G-Cter in SUMO2); alternate. Residue Lys270 forms a Glycyl lysine isopeptide (Lys-Gly) (interchain with G-Cter in SUMO2); alternate linkage. A phosphoserine mark is found at Ser277, Ser282, Ser301, and Ser307. A Glycyl lysine isopeptide (Lys-Gly) (interchain with G-Cter in SUMO2); alternate cross-link involves residue Lys311. N6-acetyllysine is present on residues Lys311, Lys316, and Lys341. Residues Lys366 and Lys378 each participate in a glycyl lysine isopeptide (Lys-Gly) (interchain with G-Cter in SUMO2) cross-link. The tract at residues Glu384–Val442 is disordered. A tail region spans residues Glu384–Met665. 10 positions are modified to phosphoserine: Ser390, Ser392, Ser395, Ser398, Ser403, Ser404, Ser406, Ser407, Ser409, and Ser414. A compositionally biased stretch (low complexity) spans Ser395–Ser409. Thr416 carries the post-translational modification Phosphothreonine. Lys417 is subject to N6-acetyllysine. Glycyl lysine isopeptide (Lys-Gly) (interchain with G-Cter in SUMO2) cross-links involve residues Lys417 and Lys420. A Nuclear localization signal motif is present at residues Lys417 to Glu422. Phosphoserine occurs at positions 423, 426, 429, and 431. In terms of domain architecture, LTD spans Ser428–Arg545. Residue Lys450 forms a Glycyl lysine isopeptide (Lys-Gly) (interchain with G-Cter in SUMO2); alternate linkage. An N6-acetyllysine mark is found at Lys450 and Lys457. Ser458 and Ser463 each carry phosphoserine. Residues Lys470 and Lys486 each participate in a glycyl lysine isopeptide (Lys-Gly) (interchain with G-Cter in SUMO2) cross-link. Lys486 bears the N6-acetyllysine mark. Thr496 carries the post-translational modification Phosphothreonine. Phosphoserine is present on Ser500. Phosphothreonine occurs at positions 505 and 510. Ser546 is modified (phosphoserine). Position 548 is a phosphothreonine (Thr548). The segment covering Asp552–Asp561 has biased composition (acidic residues). The interval Asp552 to Asp577 is disordered. Residues Ser570 and Ser573 each carry the phosphoserine modification. Lys599 is covalently cross-linked (Glycyl lysine isopeptide (Lys-Gly) (interchain with G-Cter in SUMO2); alternate). Residue Lys599 forms a Glycyl lysine isopeptide (Lys-Gly) (interchain with G-Cter in SUMO1); alternate linkage. Residues Ser613, Ser614, Ser617, and Ser620 each carry the phosphoserine modification. O-linked (GlcNAc) serine glycosylation is found at Ser626 and Ser629. Phosphoserine is present on residues Ser629, Ser633, Ser637, and Ser653. A propeptide spans Leu648–Cys662 (removed in Lamin-A/C form). Position 662 is a cysteine methyl ester (Cys662). Cys662 is lipidated: S-farnesyl cysteine. Residues Ser663 to Met665 constitute a propeptide, removed in Prelamin-A/C form and in Lamin-A/C form.

This sequence belongs to the intermediate filament family. In terms of assembly, homodimer of lamin A and lamin C. Lamin dimers then assemble into dimeric head-to-tail polymers. Ultimately, two head-to-tail polymers assemble laterally into a protofilament with a uniformly shaped rod of 3.5 nm in diameter. Interacts with lamin-associated polypeptides IA, IB and TMPO-alpha, RB1 and with emerin. Interacts with SREBF1, SREBF2, SUN2 and TMEM43. Interacts with TMEM201. Proteolytically processed isoform A interacts with NARF. Interacts with SUN1. Interacts with MLIP. Interacts with DMPK; may regulate nuclear envelope stability. Interacts with SUV39H1; the interaction increases stability of SUV39H1. Interacts with SYNE2. Interacts with ITSN1 isoform 2. Interacts with IFFO1; enables the formation of an interior nucleoskeleton that is recruited to DNA double-strand breaks. Interacts with EMD. As to quaternary structure, interacts (via C-terminus) with LEMD2 (via N-terminus) (in vitro). In terms of processing, proteolytic cleavage of the C-terminal of 18 residues of prelamin-A/C results in the production of lamin-A/C. The prelamin-A/C maturation pathway includes farnesylation of CAAX motif by protein farnesyltransferase (FNTA and FNTB), removal of the last three amino acids (-AAX) by RCE1/FACE2 and/or ZMPSTE24, methylation of the C-terminal cysteine by ICMT and endoproteolytic removal of the last 15 C-terminal amino acids by ZMPSTE24. Proteolytic cleavage requires prior farnesylation and methylation, and absence of these blocks cleavage. Post-translationally, farnesylation of prelamin-A/C facilitates nuclear envelope targeting. Phosphorylation plays a key role in lamin organization, subcellular localization and nuclear envelope disintegration. Phosphorylation by CDK1 at Ser-22 and Ser-392 at the onset of mitosis drives lamin disassembly and nuclear envelope breakdown. Phosphorylation at Ser-22 and Ser-392 during interphase promotes localization to the nucleoplasm and regulates lamina assembly. Phosphorylation at Ser-22, Ser-392 and Ser-629 during interphase causes redistribution between the nucleus and the cytoplasm. Phosphorylation at Ser-22 by CDK1 regulates matrix stiffness. Phosphorylation status of Ser-22 determines its localization between double-strand break (DSB) sites and the nuclear matrix. Phosphorylated by ATR at Ser-282 in response to DNA damage, leading to lamin disassembly and nuclear envelope rupture. Phosphorylation also regulates stability in micronuclei arising from genome instability: phosphorylation at Ser-395 by ATR in response to genome instability and double-stranded DNA breaks primes LMNA for subsequent phosphorylation at Ser-392 by CDK1 and micronuclei envelope rupture. The rupture of micronuclear envelope triggers the cGAS-STING pathway thereby activating the type I interferon response and innate immunity. In terms of processing, acetylation by KAT8 is required for nuclear architecture. Post-translationally, sumoylation is necessary for the localization to the nuclear envelope.

Its subcellular location is the nucleus lamina. The protein resides in the nucleus envelope. The protein localises to the nucleus. It localises to the nucleoplasm. It is found in the nucleus matrix. Functionally, lamins are intermediate filament proteins that assemble into a filamentous meshwork, and which constitute the major components of the nuclear lamina, a fibrous layer on the nucleoplasmic side of the inner nuclear membrane. Lamins provide a framework for the nuclear envelope, bridging the nuclear envelope and chromatin, thereby playing an important role in nuclear assembly, chromatin organization, nuclear membrane and telomere dynamics. Lamin A and C also regulate matrix stiffness by conferring nuclear mechanical properties. The structural integrity of the lamina is strictly controlled by the cell cycle, as seen by the disintegration and formation of the nuclear envelope in prophase and telophase, respectively. Lamin A and C are present in equal amounts in the lamina of mammals. Also invoved in DNA repair: recruited by DNA repair proteins XRCC4 and IFFO1 to the DNA double-strand breaks (DSBs) to prevent chromosome translocation by immobilizing broken DNA ends. Required for normal development of peripheral nervous system and skeletal muscle and for muscle satellite cell proliferation. Required for osteoblastogenesis and bone formation. Also prevents fat infiltration of muscle and bone marrow, helping to maintain the volume and strength of skeletal muscle and bone. Required for cardiac homeostasis. In terms of biological role, prelamin-A/C can accelerate smooth muscle cell senescence. It acts to disrupt mitosis and induce DNA damage in vascular smooth muscle cells (VSMCs), leading to mitotic failure, genomic instability, and premature senescence. This is Prelamin-A/C (Lmna) from Rattus norvegicus (Rat).